The following is a 98-amino-acid chain: Small ribosomal subunit protein uS17 (98 aa).

Positions 1–21 (MADQKGPKYTPAAEKPRGRRK) are disordered. Lys-96 participates in a covalent cross-link: Isoglutamyl lysine isopeptide (Lys-Gln) (interchain with Q-Cter in protein Pup).

It belongs to the universal ribosomal protein uS17 family. Part of the 30S ribosomal subunit.

In terms of biological role, one of the primary rRNA binding proteins, it binds specifically to the 5'-end of 16S ribosomal RNA. This Mycolicibacterium smegmatis (strain ATCC 700084 / mc(2)155) (Mycobacterium smegmatis) protein is Small ribosomal subunit protein uS17 (rpsQ).